The sequence spans 138 residues: Small ribosomal subunit protein uS12 (138 aa).

The segment at 33–55 is disordered; sequence KEHTNVSSPQKRGVCTRVGTMTP. D102 bears the 3-methylthioaspartic acid mark.

Belongs to the universal ribosomal protein uS12 family. As to quaternary structure, part of the 30S ribosomal subunit. Contacts proteins S8 and S17. May interact with IF1 in the 30S initiation complex.

Its function is as follows. With S4 and S5 plays an important role in translational accuracy. Functionally, interacts with and stabilizes bases of the 16S rRNA that are involved in tRNA selection in the A site and with the mRNA backbone. Located at the interface of the 30S and 50S subunits, it traverses the body of the 30S subunit contacting proteins on the other side and probably holding the rRNA structure together. The combined cluster of proteins S8, S12 and S17 appears to hold together the shoulder and platform of the 30S subunit. The protein is Small ribosomal subunit protein uS12 of Bacillus velezensis (strain DSM 23117 / BGSC 10A6 / LMG 26770 / FZB42) (Bacillus amyloliquefaciens subsp. plantarum).